The following is a 215-amino-acid chain: Putative ribosome biogenesis protein slx9-like (215 aa).

Disordered stretches follow at residues 49 to 121 (IIPS…GLGM), 133 to 157 (DSMK…MSLK), and 189 to 215 (LQNQ…LKRK).

This sequence belongs to the SLX9 family.

Its subcellular location is the nucleus. It is found in the nucleolus. Its function is as follows. Involved in ribosome biogenesis. The protein is Putative ribosome biogenesis protein slx9-like of Dictyostelium discoideum (Social amoeba).